We begin with the raw amino-acid sequence, 201 residues long: tRNA (guanine-N(7)-)-methyltransferase (201 aa).

S-adenosyl-L-methionine-binding residues include glutamate 33, glutamate 58, aspartate 85, and aspartate 108. The active site involves aspartate 108. Lysine 112 and aspartate 144 together coordinate substrate.

It belongs to the class I-like SAM-binding methyltransferase superfamily. TrmB family.

It carries out the reaction guanosine(46) in tRNA + S-adenosyl-L-methionine = N(7)-methylguanosine(46) in tRNA + S-adenosyl-L-homocysteine. Its pathway is tRNA modification; N(7)-methylguanine-tRNA biosynthesis. Functionally, catalyzes the formation of N(7)-methylguanine at position 46 (m7G46) in tRNA. The chain is tRNA (guanine-N(7)-)-methyltransferase from Anaeromyxobacter dehalogenans (strain 2CP-C).